We begin with the raw amino-acid sequence, 588 residues long: 3-methylmercaptopropionyl-CoA dehydrogenase (588 aa).

Glutamate 435 serves as the catalytic Proton acceptor.

This sequence belongs to the acyl-CoA dehydrogenase family. FAD serves as cofactor.

The enzyme catalyses 3-(methylsulfanyl)propanoyl-CoA + oxidized [electron-transfer flavoprotein] + H(+) = 3-(methylsulfanyl)acryloyl-CoA + reduced [electron-transfer flavoprotein]. In terms of biological role, involved in the assimilation of dimethylsulphoniopropionate (DMSP), an important compound in the fixation of carbon in marine phytoplankton, by mediating the conversion of 3-(methylthio)propanoyl-CoA (MMPA-CoA) to 3-(methylthio)acryloyl-CoA (MTA-CoA). In Ruegeria pomeroyi (strain ATCC 700808 / DSM 15171 / DSS-3) (Silicibacter pomeroyi), this protein is 3-methylmercaptopropionyl-CoA dehydrogenase.